A 285-amino-acid polypeptide reads, in one-letter code: Probable endonuclease 4 (285 aa).

Residues His-67, His-107, Glu-144, Asp-178, His-181, His-215, Asp-228, His-230, and Glu-260 each contribute to the Zn(2+) site.

This sequence belongs to the AP endonuclease 2 family. Zn(2+) is required as a cofactor.

It carries out the reaction Endonucleolytic cleavage to 5'-phosphooligonucleotide end-products.. Endonuclease IV plays a role in DNA repair. It cleaves phosphodiester bonds at apurinic or apyrimidinic (AP) sites, generating a 3'-hydroxyl group and a 5'-terminal sugar phosphate. In Chloroflexus aurantiacus (strain ATCC 29366 / DSM 635 / J-10-fl), this protein is Probable endonuclease 4.